Reading from the N-terminus, the 289-residue chain is Thymidylate synthase (289 aa).

DUMP contacts are provided by residues Arg-21 and 150–151; that span reads RR. The active-site Nucleophile is Cys-170. DUMP-binding positions include 191 to 194, Asn-202, and 232 to 234; these read RSAD and HIY. Position 194 (Asp-194) interacts with (6R)-5,10-methylene-5,6,7,8-tetrahydrofolate. Ala-288 is a (6R)-5,10-methylene-5,6,7,8-tetrahydrofolate binding site.

The protein belongs to the thymidylate synthase family. Bacterial-type ThyA subfamily. Homodimer.

It is found in the cytoplasm. The enzyme catalyses dUMP + (6R)-5,10-methylene-5,6,7,8-tetrahydrofolate = 7,8-dihydrofolate + dTMP. It functions in the pathway pyrimidine metabolism; dTTP biosynthesis. Its function is as follows. Catalyzes the reductive methylation of 2'-deoxyuridine-5'-monophosphate (dUMP) to 2'-deoxythymidine-5'-monophosphate (dTMP) while utilizing 5,10-methylenetetrahydrofolate (mTHF) as the methyl donor and reductant in the reaction, yielding dihydrofolate (DHF) as a by-product. This enzymatic reaction provides an intracellular de novo source of dTMP, an essential precursor for DNA biosynthesis. This Malacoplasma penetrans (strain HF-2) (Mycoplasma penetrans) protein is Thymidylate synthase.